Consider the following 375-residue polypeptide: Pulmonary surfactant-associated protein D (375 aa).

Residues 1-20 (MLLFLLSALVLLTQPLGYLE) form the signal peptide. S-nitrosocysteine is present on residues C35 and C40. Residues 45–221 (SGLPGRDGRD…DKGAKGESGL (177 aa)) form a disordered region. In terms of domain architecture, Collagen-like spans 46-222 (GLPGRDGRDG…KGAKGESGLP (177 aa)). Basic and acidic residues predominate over residues 50-65 (RDGRDGREGPRGEKGD). The segment covering 66–86 (PGLPGAAGQAGMPGQAGPVGP) has biased composition (low complexity). P78 is subject to 4-hydroxyproline. K87 is modified (5-hydroxylysine). N-linked (GlcNAc...) asparagine glycosylation is present at N90. P96 is subject to 4-hydroxyproline. Residue K99 is modified to 5-hydroxylysine. Over residues 105–114 (SGPPGPPGVP) the composition is skewed to pro residues. 2 stretches are compositionally biased toward low complexity: residues 116-132 (PAGR…IGPQ) and 138-150 (KGEA…VGAP). A 4-hydroxyproline mark is found at P171 and P177. Basic and acidic residues predominate over residues 204–216 (KGDKGIPGDKGAK). A coiled-coil region spans residues 223–252 (DVASLRQQVEALQGQVQHLQAAFSQYKKVE). A C-type lectin domain is found at 260–375 (VGEKIFKTAG…GEKRLVVCEF (116 aa)). 2 disulfide bridges follow: C281–C373 and C351–C365.

It belongs to the SFTPD family. Oligomeric complex of 4 set of homotrimers. In terms of processing, the N-terminus is blocked. Post-translationally, hydroxylation on proline residues within the sequence motif, GXPG, is most likely to be 4-hydroxy as this fits the requirement for 4-hydroxylation in vertebrates. S-nitrosylation at Cys-35 and Cys-40 alters the quaternary structure which results in a pro-inflammatory chemoattractive signaling activity with macrophages. In terms of tissue distribution, expressed in lung, brain, pancreas and adipose tissue (mainly mature adipocytes).

It localises to the secreted. The protein resides in the extracellular space. Its subcellular location is the extracellular matrix. The protein localises to the surface film. In terms of biological role, contributes to the lung's defense against inhaled microorganisms, organic antigens and toxins. Interacts with compounds such as bacterial lipopolysaccharides, oligosaccharides and fatty acids and modulates leukocyte action in immune response. May participate in the extracellular reorganization or turnover of pulmonary surfactant. Binds strongly maltose residues and to a lesser extent other alpha-glucosyl moieties. This Homo sapiens (Human) protein is Pulmonary surfactant-associated protein D (SFTPD).